Reading from the N-terminus, the 1091-residue chain is Sodium/potassium exporting P-type ATPase 5 (1091 aa).

At 1 to 63 the chain is on the cytoplasmic side; the sequence is MSEGTVKENN…LGDDTKIDYK (63 aa). A helical transmembrane segment spans residues 64 to 84; that stretch reads AMVLHQVCNAMIMVLVISMAI. Residues 85–90 lie on the Extracellular side of the membrane; the sequence is SFAVRD. Residues 91-111 form a helical membrane-spanning segment; that stretch reads WITGGVISFVIAVNVLIGLVQ. The Cytoplasmic segment spans residues 112–282; sequence EYKATKTMNS…TNVGTPLHRK (171 aa). A helical transmembrane segment spans residues 283-303; that stretch reads LSKLAVLLFWIAVLFAIIVMA. Residues 304–312 lie on the Extracellular side of the membrane; that stretch reads SQKFDVDKR. Residues 313 to 333 form a helical membrane-spanning segment; the sequence is VAIYAICVALSMIPSSLVVVL. Residues 334–815 lie on the Cytoplasmic side of the membrane; that stretch reads TITMSVGAAV…RRMTDNIQKF (482 aa). Residue aspartate 369 is the 4-aspartylphosphate intermediate of the active site. 2 residues coordinate Mg(2+): aspartate 369 and threonine 371. ATP contacts are provided by threonine 371 and glutamate 483. Residues 499 to 525 are disordered; sequence ALTGEKSTNQSNENDQSSLSQHNEKPG. A compositionally biased stretch (polar residues) spans 503–519; it reads EKSTNQSNENDQSSLSQ. 7 residues coordinate ATP: lysine 561, arginine 606, threonine 673, glycine 674, aspartate 675, arginine 732, and lysine 738. Residue aspartate 757 coordinates Mg(2+). Residue asparagine 760 participates in ATP binding. A helical transmembrane segment spans residues 816 to 836; sequence VLQLLAENVAQALYLIIGLVF. The Extracellular portion of the chain corresponds to 837–848; the sequence is RDENGKSVFPLS. Residues 849 to 869 traverse the membrane as a helical segment; the sequence is PVEVLWIIVVTSCFPAMGLGL. Topologically, residues 870–885 are cytoplasmic; sequence EKAAPDLMDRPPNDSE. Residues 886-906 form a helical membrane-spanning segment; the sequence is VGIFTWEVIIDTFAYGIIMTG. The Extracellular portion of the chain corresponds to 907–943; sequence SCMASFTGSLYGINSGRLGHDCDGTYNSSCRDVYRSR. A helical transmembrane segment spans residues 944–964; it reads SAAFATMTWCALILAWEVVDM. At 965–991 the chain is on the cytoplasmic side; it reads RRSFFRMHPDTDSPVKEFFRSIWGNQF. Residues 992 to 1012 form a helical membrane-spanning segment; the sequence is LFWSIIFGFVSAFPVVYIPVI. Residues 1013-1021 lie on the Extracellular side of the membrane; it reads NDKVFLHKP. A helical transmembrane segment spans residues 1022–1042; that stretch reads IGAEWGLAIAFTIAFWIGAEL. Residues 1043 to 1091 lie on the Cytoplasmic side of the membrane; the sequence is YKCGKRRYFKTQRAHNSENDLERSSKHDPFEAYSTSTTLQSEINISVKH.

Belongs to the cation transport ATPase (P-type) (TC 3.A.3) family. Type IID subfamily. It depends on Mg(2+) as a cofactor. Post-translationally, the active site is phosphorylated in presence of sodium or potassium and in conditions of higher pH. Not phosphorylated in presence of calcium ions.

It localises to the cell membrane. The enzyme catalyses Na(+)(in) + ATP + H2O = Na(+)(out) + ADP + phosphate + H(+). It catalyses the reaction K(+)(in) + ATP + H2O = K(+)(out) + ADP + phosphate + H(+). Functionally, catalyzes the hydrolysis of ATP coupled with the export of sodium and potassium from the cell. May export potassium less efficiently. May transport other cations such as lithium. Sodium/potassium efflux ATPases are involved in salt tolerance and maintaining the membrane potential across the plasma membrane in high salinity (Na+) or alkaline (K+) environments. The sequence is that of Sodium/potassium exporting P-type ATPase 5 from Saccharomyces cerevisiae (strain ATCC 204508 / S288c) (Baker's yeast).